Consider the following 678-residue polypeptide: Probable E3 ubiquitin ligase complex SCF subunit sconB (678 aa).

Positions 1 to 52 (MSTEDNHDSQILTARHRSDASEQSFKSLFGGPSSEDGKETEPDTHDHNHSFS) are disordered. A compositionally biased stretch (basic and acidic residues) spans 35–49 (EDGKETEPDTHDHNH). Positions 178–224 (IDFITALPPEIAFKILCYLDTTSLCKASQVSRGWRALADDDVVWHRM) constitute an F-box domain. Residues 266–287 (VVGPRSPDASAESPPSGKRKLE) form a disordered region. 8 WD repeats span residues 347 to 375 (GHTNGVMCLQFEDNILATGSYDTTIKIWD), 387 to 415 (GHESGIRCLQFDDTKLISGSMDRTIKVWN), 427 to 455 (GHRGGVIGLHFDASILASGSVDKTVKIWN), 466 to 496 (GHTDWVNAVRVDTSSRTVFSASDDCTVRLWD), 508 to 543 (GHVGQVQQVVPLPREFEFEEHDAECENDDLSTTSGD), 553 to 595 (MGLE…RLWE), 607 to 635 (GHLEGVWALGADTLRIVSGAEDRMIKIWD), and 647 to 675 (GHSGPVTCIGLGDSRFATGSEDCEVRMYS).

This sequence belongs to the WD repeat MET30/SCONB/SCON-2 family. Component of the SCF(sconB) E3 ubiquitin ligase complex.

The protein operates within protein modification; protein ubiquitination. Functionally, component of the SCF(sconB) E3 ubiquitin ligase complex involved in the regulation of sulfur metabolite repression, probably by mediating the inactivation or degradation of the metR transcription factor. The sequence is that of Probable E3 ubiquitin ligase complex SCF subunit sconB (sconB) from Emericella nidulans (strain FGSC A4 / ATCC 38163 / CBS 112.46 / NRRL 194 / M139) (Aspergillus nidulans).